The following is a 92-amino-acid chain: Small ribosomal subunit protein uS19 (92 aa).

This sequence belongs to the universal ribosomal protein uS19 family.

Its function is as follows. Protein S19 forms a complex with S13 that binds strongly to the 16S ribosomal RNA. The sequence is that of Small ribosomal subunit protein uS19 from Allorhizobium ampelinum (strain ATCC BAA-846 / DSM 112012 / S4) (Agrobacterium vitis (strain S4)).